We begin with the raw amino-acid sequence, 130 residues long: Transcription antitermination protein NusB (130 aa).

This sequence belongs to the NusB family.

Functionally, involved in transcription antitermination. Required for transcription of ribosomal RNA (rRNA) genes. Binds specifically to the boxA antiterminator sequence of the ribosomal RNA (rrn) operons. This chain is Transcription antitermination protein NusB, found in Sulfurovum sp. (strain NBC37-1).